A 170-amino-acid polypeptide reads, in one-letter code: Crossover junction endodeoxyribonuclease RuvC (170 aa).

Catalysis depends on residues Asp12, Glu72, and Asp144. Asp12, Glu72, and Asp144 together coordinate Mg(2+).

Belongs to the RuvC family. Homodimer which binds Holliday junction (HJ) DNA. The HJ becomes 2-fold symmetrical on binding to RuvC with unstacked arms; it has a different conformation from HJ DNA in complex with RuvA. In the full resolvosome a probable DNA-RuvA(4)-RuvB(12)-RuvC(2) complex forms which resolves the HJ. Mg(2+) is required as a cofactor.

It is found in the cytoplasm. It carries out the reaction Endonucleolytic cleavage at a junction such as a reciprocal single-stranded crossover between two homologous DNA duplexes (Holliday junction).. In terms of biological role, the RuvA-RuvB-RuvC complex processes Holliday junction (HJ) DNA during genetic recombination and DNA repair. Endonuclease that resolves HJ intermediates. Cleaves cruciform DNA by making single-stranded nicks across the HJ at symmetrical positions within the homologous arms, yielding a 5'-phosphate and a 3'-hydroxyl group; requires a central core of homology in the junction. The consensus cleavage sequence is 5'-(A/T)TT(C/G)-3'. Cleavage occurs on the 3'-side of the TT dinucleotide at the point of strand exchange. HJ branch migration catalyzed by RuvA-RuvB allows RuvC to scan DNA until it finds its consensus sequence, where it cleaves and resolves the cruciform DNA. The polypeptide is Crossover junction endodeoxyribonuclease RuvC (Nitrobacter hamburgensis (strain DSM 10229 / NCIMB 13809 / X14)).